A 329-amino-acid polypeptide reads, in one-letter code: Glycerol-3-phosphate dehydrogenase [NAD(P)+] (329 aa).

Residues Ser10, Trp11, Arg31, and Lys105 each contribute to the NADPH site. 3 residues coordinate sn-glycerol 3-phosphate: Lys105, Gly134, and Ser136. Ala138 lines the NADPH pocket. The sn-glycerol 3-phosphate site is built by Lys189, Asp242, Ser252, Arg253, and Asn254. Residue Lys189 is the Proton acceptor of the active site. Arg253 contributes to the NADPH binding site. 2 residues coordinate NADPH: Val277 and Glu279.

The protein belongs to the NAD-dependent glycerol-3-phosphate dehydrogenase family.

The protein resides in the cytoplasm. It carries out the reaction sn-glycerol 3-phosphate + NAD(+) = dihydroxyacetone phosphate + NADH + H(+). The catalysed reaction is sn-glycerol 3-phosphate + NADP(+) = dihydroxyacetone phosphate + NADPH + H(+). The protein operates within membrane lipid metabolism; glycerophospholipid metabolism. In terms of biological role, catalyzes the reduction of the glycolytic intermediate dihydroxyacetone phosphate (DHAP) to sn-glycerol 3-phosphate (G3P), the key precursor for phospholipid synthesis. This is Glycerol-3-phosphate dehydrogenase [NAD(P)+] from Neisseria gonorrhoeae (strain ATCC 700825 / FA 1090).